A 145-amino-acid polypeptide reads, in one-letter code: Large ribosomal subunit protein uL13 (145 aa).

Belongs to the universal ribosomal protein uL13 family. As to quaternary structure, part of the 50S ribosomal subunit.

Functionally, this protein is one of the early assembly proteins of the 50S ribosomal subunit, although it is not seen to bind rRNA by itself. It is important during the early stages of 50S assembly. The sequence is that of Large ribosomal subunit protein uL13 from Bacillus cytotoxicus (strain DSM 22905 / CIP 110041 / 391-98 / NVH 391-98).